The primary structure comprises 519 residues: MSNQVKIFDTTLRDGEQALAASLSMKEKLQIALALERLGVDIIEAGFPVSSPGDFRSVRSIAQEVKNATVCGLSRALEKDIDACGEALSVADNFRIHTFIATSDIHVANKLRKSQDEVVEMAVNAIKHAGRYTDDIEFSCEDAGRTPIDYLCRMVESAINAGATTVNIPDTVGYTTPTEFGGIIQNLFNRVPNIDKATISVHCHNDLGLAVANSLVAVEYGARQIECTINGIGERAGNCSLEEIAMILQTRQAMLGLNTNIRSHEISRTSKLVSQLCNMPVQSNKAIVGANAFSHSSGIHQDGVLKAQNTYEIMTPESVGINKNNLNLTSRSGRHVIKHRLEELGYKAEDYDLDTLYASFVKLADKKGQVFDYDLEALLFFDKQKPADEHYKLLYLQASSGKEIIPSATVKLQVGEEEIIESCTGNGPVDAAYKAIIKVLGHEQLEIVDFKLDSKGEGADALAQVSVIVEYNGRRFNGIGLATDIVESGVKALIHVLNNTHLADQIDHQKKQQTQTAGV.

A Pyruvate carboxyltransferase domain is found at V5 to S267. Positions 14, 202, 204, and 238 each coordinate Mn(2+). Residues K392 to V519 form a regulatory domain region.

This sequence belongs to the alpha-IPM synthase/homocitrate synthase family. LeuA type 1 subfamily. As to quaternary structure, homodimer. Mn(2+) serves as cofactor.

Its subcellular location is the cytoplasm. The enzyme catalyses 3-methyl-2-oxobutanoate + acetyl-CoA + H2O = (2S)-2-isopropylmalate + CoA + H(+). It participates in amino-acid biosynthesis; L-leucine biosynthesis; L-leucine from 3-methyl-2-oxobutanoate: step 1/4. Its function is as follows. Catalyzes the condensation of the acetyl group of acetyl-CoA with 3-methyl-2-oxobutanoate (2-ketoisovalerate) to form 3-carboxy-3-hydroxy-4-methylpentanoate (2-isopropylmalate). The chain is 2-isopropylmalate synthase from Pseudoalteromonas atlantica (strain T6c / ATCC BAA-1087).